The sequence spans 715 residues: Ribosomal RNA large subunit methyltransferase K/L (715 aa).

Positions 47–158 constitute a THUMP domain; it reads LGYKISLWTR…RDNVTIFLDF (112 aa).

It belongs to the methyltransferase superfamily. RlmKL family.

It is found in the cytoplasm. The catalysed reaction is guanosine(2445) in 23S rRNA + S-adenosyl-L-methionine = N(2)-methylguanosine(2445) in 23S rRNA + S-adenosyl-L-homocysteine + H(+). It carries out the reaction guanosine(2069) in 23S rRNA + S-adenosyl-L-methionine = N(2)-methylguanosine(2069) in 23S rRNA + S-adenosyl-L-homocysteine + H(+). In terms of biological role, specifically methylates the guanine in position 2445 (m2G2445) and the guanine in position 2069 (m7G2069) of 23S rRNA. This Colwellia psychrerythraea (strain 34H / ATCC BAA-681) (Vibrio psychroerythus) protein is Ribosomal RNA large subunit methyltransferase K/L.